The primary structure comprises 732 residues: Catalase-peroxidase (732 aa).

The disordered stretch occupies residues 1–23 (MSEQSRCPVTGRTADSPATGSGL). Residues 97 to 220 (WHSAGTYRTS…LAAVQMGLIY (124 aa)) constitute a cross-link (tryptophyl-tyrosyl-methioninium (Trp-Tyr) (with M-246)). H98 functions as the Proton acceptor in the catalytic mechanism. The segment at residues 220–246 (YVNPEGPDGKPDPVAAGRDIRETFARM) is a cross-link (tryptophyl-tyrosyl-methioninium (Tyr-Met) (with W-97)). Residue H261 coordinates heme b.

Belongs to the peroxidase family. Peroxidase/catalase subfamily. Homodimer or homotetramer. Heme b is required as a cofactor. Post-translationally, formation of the three residue Trp-Tyr-Met cross-link is important for the catalase, but not the peroxidase activity of the enzyme.

It catalyses the reaction H2O2 + AH2 = A + 2 H2O. The enzyme catalyses 2 H2O2 = O2 + 2 H2O. Its function is as follows. Bifunctional enzyme with both catalase and broad-spectrum peroxidase activity. The sequence is that of Catalase-peroxidase from Prosthecochloris aestuarii (strain DSM 271 / SK 413).